Reading from the N-terminus, the 163-residue chain is Protein LOL5 (163 aa).

Polar residues-rich tracts occupy residues Met1 to Ser25 and Leu33 to His44. Positions Met1–Asp51 are disordered. Putative zinc finger regions lie at residues Gln70–Val100 and Lys108–Ile138.

The protein resides in the nucleus. Involved in plant growth and disease resistance. The chain is Protein LOL5 (LOL5) from Oryza sativa subsp. japonica (Rice).